Here is a 125-residue protein sequence, read N- to C-terminus: Large ribosomal subunit protein bL12 (125 aa).

This sequence belongs to the bacterial ribosomal protein bL12 family. Homodimer. Part of the ribosomal stalk of the 50S ribosomal subunit. Forms a multimeric L10(L12)X complex, where L10 forms an elongated spine to which 2 to 4 L12 dimers bind in a sequential fashion. Binds GTP-bound translation factors.

Its function is as follows. Forms part of the ribosomal stalk which helps the ribosome interact with GTP-bound translation factors. Is thus essential for accurate translation. The protein is Large ribosomal subunit protein bL12 of Helicobacter acinonychis (strain Sheeba).